Here is a 374-residue protein sequence, read N- to C-terminus: Putative glutamate--cysteine ligase 2 (374 aa).

It belongs to the glutamate--cysteine ligase type 2 family. YbdK subfamily.

The catalysed reaction is L-cysteine + L-glutamate + ATP = gamma-L-glutamyl-L-cysteine + ADP + phosphate + H(+). ATP-dependent carboxylate-amine ligase which exhibits weak glutamate--cysteine ligase activity. This is Putative glutamate--cysteine ligase 2 from Leptothrix cholodnii (strain ATCC 51168 / LMG 8142 / SP-6) (Leptothrix discophora (strain SP-6)).